Reading from the N-terminus, the 258-residue chain is Deoxyribose-phosphate aldolase (258 aa).

The active-site Proton donor/acceptor is Asp-101. Residue Lys-166 is the Schiff-base intermediate with acetaldehyde of the active site. The Proton donor/acceptor role is filled by Lys-200.

Belongs to the DeoC/FbaB aldolase family. DeoC type 2 subfamily.

It is found in the cytoplasm. The enzyme catalyses 2-deoxy-D-ribose 5-phosphate = D-glyceraldehyde 3-phosphate + acetaldehyde. It functions in the pathway carbohydrate degradation; 2-deoxy-D-ribose 1-phosphate degradation; D-glyceraldehyde 3-phosphate and acetaldehyde from 2-deoxy-alpha-D-ribose 1-phosphate: step 2/2. Its function is as follows. Catalyzes a reversible aldol reaction between acetaldehyde and D-glyceraldehyde 3-phosphate to generate 2-deoxy-D-ribose 5-phosphate. In Actinobacillus pleuropneumoniae serotype 3 (strain JL03), this protein is Deoxyribose-phosphate aldolase.